Reading from the N-terminus, the 892-residue chain is Translation initiation factor IF-2 (892 aa).

Basic and acidic residues-rich tracts occupy residues V93–V159 and D166–K216. The tract at residues V93 to P304 is disordered. Residues G254 to K269 are compositionally biased toward basic residues. Residues H270–A282 show a composition bias toward basic and acidic residues. The tr-type G domain occupies P391–K560. Residues G400–T407 form a G1 region. G400–T407 serves as a coordination point for GTP. The G2 stretch occupies residues G425 to H429. A G3 region spans residues D446–G449. GTP contacts are provided by residues D446–H450 and N500–D503. Residues N500–D503 are G4. The tract at residues S536–K538 is G5.

This sequence belongs to the TRAFAC class translation factor GTPase superfamily. Classic translation factor GTPase family. IF-2 subfamily.

The protein localises to the cytoplasm. Its function is as follows. One of the essential components for the initiation of protein synthesis. Protects formylmethionyl-tRNA from spontaneous hydrolysis and promotes its binding to the 30S ribosomal subunits. Also involved in the hydrolysis of GTP during the formation of the 70S ribosomal complex. The chain is Translation initiation factor IF-2 from Salmonella gallinarum (strain 287/91 / NCTC 13346).